The chain runs to 387 residues: 23S rRNA (uracil(747)-C(5))-methyltransferase RlmC (387 aa).

4 residues coordinate [4Fe-4S] cluster: C3, C11, C14, and C86. Residues Q211, F240, E269, and N319 each coordinate S-adenosyl-L-methionine. The active-site Nucleophile is C346.

It belongs to the class I-like SAM-binding methyltransferase superfamily. RNA M5U methyltransferase family. RlmC subfamily.

The enzyme catalyses uridine(747) in 23S rRNA + S-adenosyl-L-methionine = 5-methyluridine(747) in 23S rRNA + S-adenosyl-L-homocysteine + H(+). Its function is as follows. Catalyzes the formation of 5-methyl-uridine at position 747 (m5U747) in 23S rRNA. This chain is 23S rRNA (uracil(747)-C(5))-methyltransferase RlmC, found in Pasteurella multocida (strain Pm70).